The sequence spans 227 residues: Ribosomal RNA large subunit methyltransferase E (227 aa).

S-adenosyl-L-methionine contacts are provided by glycine 78, tryptophan 80, aspartate 103, aspartate 119, and aspartate 143. The Proton acceptor role is filled by lysine 183.

It belongs to the class I-like SAM-binding methyltransferase superfamily. RNA methyltransferase RlmE family.

The protein localises to the cytoplasm. It catalyses the reaction uridine(2552) in 23S rRNA + S-adenosyl-L-methionine = 2'-O-methyluridine(2552) in 23S rRNA + S-adenosyl-L-homocysteine + H(+). Its function is as follows. Specifically methylates the uridine in position 2552 of 23S rRNA at the 2'-O position of the ribose in the fully assembled 50S ribosomal subunit. The sequence is that of Ribosomal RNA large subunit methyltransferase E from Rickettsia canadensis (strain McKiel).